A 356-amino-acid chain; its full sequence is Biotin synthase (356 aa).

The Radical SAM core domain maps to G54–L278. Residues C69, C73, and C76 each coordinate [4Fe-4S] cluster. Positions 113, 144, 204, and 282 each coordinate [2Fe-2S] cluster.

This sequence belongs to the radical SAM superfamily. Biotin synthase family. Homodimer. Requires [4Fe-4S] cluster as cofactor. The cofactor is [2Fe-2S] cluster.

It carries out the reaction (4R,5S)-dethiobiotin + (sulfur carrier)-SH + 2 reduced [2Fe-2S]-[ferredoxin] + 2 S-adenosyl-L-methionine = (sulfur carrier)-H + biotin + 2 5'-deoxyadenosine + 2 L-methionine + 2 oxidized [2Fe-2S]-[ferredoxin]. The protein operates within cofactor biosynthesis; biotin biosynthesis; biotin from 7,8-diaminononanoate: step 2/2. Functionally, catalyzes the conversion of dethiobiotin (DTB) to biotin by the insertion of a sulfur atom into dethiobiotin via a radical-based mechanism. In Novosphingobium aromaticivorans (strain ATCC 700278 / DSM 12444 / CCUG 56034 / CIP 105152 / NBRC 16084 / F199), this protein is Biotin synthase.